A 565-amino-acid chain; its full sequence is Periplasmic trehalase (565 aa).

A signal peptide spans 1-30; the sequence is MKSPAPSRPQKMALIPACIFLCFAALSVQA. Substrate is bound by residues R152, 159 to 160, N196, 205 to 207, 277 to 279, and G310; these read WD, RSQ, and RPE. Active-site proton donor/acceptor residues include D312 and E496. Position 511 (E511) interacts with substrate. The segment at 538–565 is disordered; the sequence is PCDNVPATRPTVKSATTQPSTKEAQPTP. Residues 548–565 show a composition bias toward polar residues; that stretch reads TVKSATTQPSTKEAQPTP.

Belongs to the glycosyl hydrolase 37 family. As to quaternary structure, monomer.

The protein resides in the periplasm. The catalysed reaction is alpha,alpha-trehalose + H2O = alpha-D-glucose + beta-D-glucose. Functionally, provides the cells with the ability to utilize trehalose at high osmolarity by splitting it into glucose molecules that can subsequently be taken up by the phosphotransferase-mediated uptake system. This chain is Periplasmic trehalase, found in Escherichia coli (strain K12 / MC4100 / BW2952).